A 79-amino-acid chain; its full sequence is Acyl carrier protein (79 aa).

The region spanning 2-77 (SEVADKVKKI…DAVEYIEKQK (76 aa)) is the Carrier domain. S37 is subject to O-(pantetheine 4'-phosphoryl)serine.

Belongs to the acyl carrier protein (ACP) family. In terms of processing, 4'-phosphopantetheine is transferred from CoA to a specific serine of apo-ACP by AcpS. This modification is essential for activity because fatty acids are bound in thioester linkage to the sulfhydryl of the prosthetic group.

Its subcellular location is the cytoplasm. Its pathway is lipid metabolism; fatty acid biosynthesis. Functionally, carrier of the growing fatty acid chain in fatty acid biosynthesis. The chain is Acyl carrier protein from Granulibacter bethesdensis (strain ATCC BAA-1260 / CGDNIH1).